The sequence spans 249 residues: Aspartate/glutamate leucyltransferase (249 aa).

The protein belongs to the R-transferase family. Bpt subfamily.

It is found in the cytoplasm. The enzyme catalyses N-terminal L-glutamyl-[protein] + L-leucyl-tRNA(Leu) = N-terminal L-leucyl-L-glutamyl-[protein] + tRNA(Leu) + H(+). The catalysed reaction is N-terminal L-aspartyl-[protein] + L-leucyl-tRNA(Leu) = N-terminal L-leucyl-L-aspartyl-[protein] + tRNA(Leu) + H(+). In terms of biological role, functions in the N-end rule pathway of protein degradation where it conjugates Leu from its aminoacyl-tRNA to the N-termini of proteins containing an N-terminal aspartate or glutamate. In Brucella abortus (strain 2308), this protein is Aspartate/glutamate leucyltransferase.